The sequence spans 353 residues: tRNA N6-adenosine threonylcarbamoyltransferase (353 aa).

Fe cation contacts are provided by His-119 and His-123. Residues 145-149, Asp-178, Gly-191, and Asn-285 each bind substrate; that span reads LVSGG. Asp-313 serves as a coordination point for Fe cation.

The protein belongs to the KAE1 / TsaD family. Requires Fe(2+) as cofactor.

Its subcellular location is the cytoplasm. It carries out the reaction L-threonylcarbamoyladenylate + adenosine(37) in tRNA = N(6)-L-threonylcarbamoyladenosine(37) in tRNA + AMP + H(+). Its function is as follows. Required for the formation of a threonylcarbamoyl group on adenosine at position 37 (t(6)A37) in tRNAs that read codons beginning with adenine. Is involved in the transfer of the threonylcarbamoyl moiety of threonylcarbamoyl-AMP (TC-AMP) to the N6 group of A37, together with TsaE and TsaB. TsaD likely plays a direct catalytic role in this reaction. The chain is tRNA N6-adenosine threonylcarbamoyltransferase from Magnetococcus marinus (strain ATCC BAA-1437 / JCM 17883 / MC-1).